We begin with the raw amino-acid sequence, 426 residues long: Enolase (426 aa).

The disordered stretch occupies residues 38–60 (PSGASTGAHEAVEKRDGDKSRYG). Positions 47-58 (EAVEKRDGDKSR) are enriched in basic and acidic residues. Gln163 lines the (2R)-2-phosphoglycerate pocket. The active-site Proton donor is Glu205. Asp242, Glu285, and Asp312 together coordinate Mg(2+). Residues Lys337, Arg366, Ser367, and Lys388 each coordinate (2R)-2-phosphoglycerate. Lys337 (proton acceptor) is an active-site residue.

Belongs to the enolase family. Mg(2+) is required as a cofactor.

It is found in the cytoplasm. The protein resides in the secreted. Its subcellular location is the cell surface. The catalysed reaction is (2R)-2-phosphoglycerate = phosphoenolpyruvate + H2O. The protein operates within carbohydrate degradation; glycolysis; pyruvate from D-glyceraldehyde 3-phosphate: step 4/5. In terms of biological role, catalyzes the reversible conversion of 2-phosphoglycerate (2-PG) into phosphoenolpyruvate (PEP). It is essential for the degradation of carbohydrates via glycolysis. In Caulobacter sp. (strain K31), this protein is Enolase.